The following is a 793-amino-acid chain: Phenylalanine--tRNA ligase beta subunit (793 aa).

The region spanning 39–154 is the tRNA-binding domain; sequence TCSFSSIITA…ENTPLGESAC (116 aa). The B5 domain maps to 403–481; sequence PQASTLSFRT…QPWKVENKKA (79 aa). Residues D457, D463, E466, and E467 each coordinate Mg(2+). An FDX-ACB domain is found at 697 to 793; that stretch reads PIYPSSFRDI…QINDTKGTID (97 aa).

Belongs to the phenylalanyl-tRNA synthetase beta subunit family. Type 1 subfamily. Tetramer of two alpha and two beta subunits. The cofactor is Mg(2+).

The protein resides in the cytoplasm. The catalysed reaction is tRNA(Phe) + L-phenylalanine + ATP = L-phenylalanyl-tRNA(Phe) + AMP + diphosphate + H(+). This Chlamydia caviae (strain ATCC VR-813 / DSM 19441 / 03DC25 / GPIC) (Chlamydophila caviae) protein is Phenylalanine--tRNA ligase beta subunit.